A 282-amino-acid chain; its full sequence is Pantothenate synthetase (282 aa).

Position 33 to 40 (33 to 40 (MGALHAGH)) interacts with ATP. The Proton donor role is filled by His40. Gln64 contributes to the (R)-pantoate binding site. Gln64 serves as a coordination point for beta-alanine. Position 150 to 153 (150 to 153 (GEKD)) interacts with ATP. Gln156 is a binding site for (R)-pantoate. Residues Val179 and 187–190 (LSSR) contribute to the ATP site.

Belongs to the pantothenate synthetase family. In terms of assembly, homodimer.

It localises to the cytoplasm. The catalysed reaction is (R)-pantoate + beta-alanine + ATP = (R)-pantothenate + AMP + diphosphate + H(+). Its pathway is cofactor biosynthesis; (R)-pantothenate biosynthesis; (R)-pantothenate from (R)-pantoate and beta-alanine: step 1/1. Its function is as follows. Catalyzes the condensation of pantoate with beta-alanine in an ATP-dependent reaction via a pantoyl-adenylate intermediate. The sequence is that of Pantothenate synthetase from Rhodospirillum rubrum (strain ATCC 11170 / ATH 1.1.1 / DSM 467 / LMG 4362 / NCIMB 8255 / S1).